Consider the following 71-residue polypeptide: uncharacterized protein (71 aa).

This is an uncharacterized protein from Saccharomyces cerevisiae (strain ATCC 204508 / S288c) (Baker's yeast).